The following is a 191-amino-acid chain: GDP-mannose pyrophosphatase (191 aa).

GDP-alpha-D-mannose is bound by residues tyrosine 17, 38–40 (KRE), arginine 67, and 85–87 (AGL). In terms of domain architecture, Nudix hydrolase spans 43 to 180 (DRGNGATILL…EIRDGKTVLL (138 aa)). Residues alanine 85, glutamate 100, and glutamate 104 each contribute to the Mg(2+) site. The Nudix box motif lies at 86–106 (GLLDNDEPEVCIRKEAIEETG). GDP-alpha-D-mannose is bound by residues glutamate 104, glutamate 127, 150–151 (DE), and lysine 176. Glutamate 151 contacts Mg(2+).

This sequence belongs to the Nudix hydrolase family. NudK subfamily. Homodimer. Requires Mg(2+) as cofactor.

The catalysed reaction is GDP-alpha-D-mannose + H2O = alpha-D-mannose 1-phosphate + GMP + 2 H(+). Its function is as follows. Nucleoside diphosphate sugar hydrolase that hydrolyzes GDP-mannose as its preferred substrate, yielding GMP and mannose-1-phosphate. The sequence is that of GDP-mannose pyrophosphatase (nudK) from Escherichia coli (strain SMS-3-5 / SECEC).